Consider the following 143-residue polypeptide: Large ribosomal subunit protein uL11 (143 aa).

Belongs to the universal ribosomal protein uL11 family. In terms of assembly, part of the ribosomal stalk of the 50S ribosomal subunit. Interacts with L10 and the large rRNA to form the base of the stalk. L10 forms an elongated spine to which L12 dimers bind in a sequential fashion forming a multimeric L10(L12)X complex. One or more lysine residues are methylated.

Forms part of the ribosomal stalk which helps the ribosome interact with GTP-bound translation factors. This Saccharophagus degradans (strain 2-40 / ATCC 43961 / DSM 17024) protein is Large ribosomal subunit protein uL11.